The chain runs to 213 residues: ATP-dependent Clp protease proteolytic subunit 1 (213 aa).

Ser108 acts as the Nucleophile in catalysis. His133 is a catalytic residue.

This sequence belongs to the peptidase S14 family. As to quaternary structure, fourteen ClpP subunits assemble into 2 heptameric rings which stack back to back to give a disk-like structure with a central cavity, resembling the structure of eukaryotic proteasomes.

It localises to the cytoplasm. It carries out the reaction Hydrolysis of proteins to small peptides in the presence of ATP and magnesium. alpha-casein is the usual test substrate. In the absence of ATP, only oligopeptides shorter than five residues are hydrolyzed (such as succinyl-Leu-Tyr-|-NHMec, and Leu-Tyr-Leu-|-Tyr-Trp, in which cleavage of the -Tyr-|-Leu- and -Tyr-|-Trp bonds also occurs).. Cleaves peptides in various proteins in a process that requires ATP hydrolysis. Has a chymotrypsin-like activity. Plays a major role in the degradation of misfolded proteins. In Frankia casuarinae (strain DSM 45818 / CECT 9043 / HFP020203 / CcI3), this protein is ATP-dependent Clp protease proteolytic subunit 1.